Here is a 296-residue protein sequence, read N- to C-terminus: MLTFQEIILKLHHYWASKGCAIIQPLDMEVGAGTFHPATTLRAIGPEPWTAAYVQPSRRPTDGRYGENPNRTQHYYQYQVVMKPSPDDIQELYLGSLRELGIDPLENDIRFVEDNWESPTLGAWGLGWEVWSNGMEITQFTYFQQVGGLECKPVMGEITYGLERLAMYIQNVDSMYDILWANTQNGPLYYRDVFLQNEIEMSTYNFEEANVEELFKQFDLLEKEGYRLVGKNLPIPAYEFVLKASHTFNLLDARHAISVTERQGYILRVRKLALEVAKEYYSAREKLGFPAFKKNN.

Belongs to the class-II aminoacyl-tRNA synthetase family. Tetramer of two alpha and two beta subunits.

The protein resides in the cytoplasm. The catalysed reaction is tRNA(Gly) + glycine + ATP = glycyl-tRNA(Gly) + AMP + diphosphate. The chain is Glycine--tRNA ligase alpha subunit from Francisella philomiragia subsp. philomiragia (strain ATCC 25017 / CCUG 19701 / FSC 153 / O#319-036).